Here is a 379-residue protein sequence, read N- to C-terminus: Guanine nucleotide-binding protein G(s) subunit alpha (379 aa).

A G-alpha domain is found at 38–379 (STHRLLLLGA…RMHLRQYELL (342 aa)). A G1 motif region spans residues 41-54 (RLLLLGAGESGKST). GTP-binding positions include 46-53 (GAGESGKS), 182-188 (LRCRVLT), 207-211 (DVGGQ), 276-279 (NKQD), and alanine 351. Residues serine 53 and threonine 188 each coordinate Mg(2+). The segment at 180 to 188 (DILRCRVLT) is G2 motif. The G3 motif stretch occupies residues 203–212 (FHMFDVGGQR). Residues 272 to 279 (ILFLNKQD) are G4 motif. The tract at residues 349-354 (TCAVDT) is G5 motif.

It belongs to the G-alpha family. G(s) subfamily. In terms of assembly, g proteins are composed of 3 units; alpha, beta and gamma. The alpha chain contains the guanine nucleotide binding site.

Functionally, guanine nucleotide-binding proteins (G proteins) are involved as modulators or transducers in various transmembrane signaling systems. The G(s) protein is involved in hormonal regulation of adenylate cyclase: it activates the cyclase in response to beta-adrenergic stimuli. This Schistosoma mansoni (Blood fluke) protein is Guanine nucleotide-binding protein G(s) subunit alpha.